The sequence spans 313 residues: Transcription factor MafB (313 aa).

Disordered regions lie at residues Gln51–Thr77 and Met151–Arg197. Residues Ser55 to Pro76 are compositionally biased toward low complexity. The span at Pro154–His166 shows a compositional bias: basic residues. Over residues Gln167–Ser192 the composition is skewed to low complexity. The segment at Arg225–Lys250 is basic motif. Residues Arg225–Leu288 enclose the bZIP domain. The leucine-zipper stretch occupies residues Leu253–Leu274. Residues Asn292–Met313 form a disordered region.

This sequence belongs to the bZIP family. Maf subfamily. Homodimer or heterodimer with other bHLH-Zip transcription factors. Binds DNA as a homodimer or a heterodimer.

It is found in the nucleus. Its function is as follows. Acts as a transcriptional activator or repressor. Implicated in the regulation of cell-type specific gene expression and play a role in inductive events during lens development. The polypeptide is Transcription factor MafB (mafb) (Xenopus laevis (African clawed frog)).